We begin with the raw amino-acid sequence, 674 residues long: Methionine--tRNA ligase (674 aa).

The 'HIGH' region signature appears at 11-21 (PYANGDLHLGH). Positions 142, 145, 155, and 158 each coordinate Zn(2+). The 'KMSKS' region signature appears at 330 to 334 (KMSKS). Lysine 333 provides a ligand contact to ATP. The 101-residue stretch at 574 to 674 (DFMKVDLRIA…EGAQPGMRVK (101 aa)) folds into the tRNA-binding domain.

Belongs to the class-I aminoacyl-tRNA synthetase family. MetG type 1 subfamily. As to quaternary structure, homodimer. The cofactor is Zn(2+).

The protein resides in the cytoplasm. It carries out the reaction tRNA(Met) + L-methionine + ATP = L-methionyl-tRNA(Met) + AMP + diphosphate. Functionally, is required not only for elongation of protein synthesis but also for the initiation of all mRNA translation through initiator tRNA(fMet) aminoacylation. The chain is Methionine--tRNA ligase from Francisella tularensis subsp. tularensis (strain FSC 198).